Here is a 281-residue protein sequence, read N- to C-terminus: Diaminopimelate epimerase (281 aa).

N14 and N65 together coordinate substrate. C74 functions as the Proton donor in the catalytic mechanism. Substrate is bound by residues 75 to 76 (GN), N165, N198, and 216 to 217 (ER). Residue C225 is the Proton acceptor of the active site. Substrate is bound at residue 226-227 (GT).

Belongs to the diaminopimelate epimerase family. In terms of assembly, homodimer.

The protein resides in the cytoplasm. The catalysed reaction is (2S,6S)-2,6-diaminopimelate = meso-2,6-diaminopimelate. The protein operates within amino-acid biosynthesis; L-lysine biosynthesis via DAP pathway; DL-2,6-diaminopimelate from LL-2,6-diaminopimelate: step 1/1. In terms of biological role, catalyzes the stereoinversion of LL-2,6-diaminopimelate (L,L-DAP) to meso-diaminopimelate (meso-DAP), a precursor of L-lysine and an essential component of the bacterial peptidoglycan. The protein is Diaminopimelate epimerase of Leptospira interrogans serogroup Icterohaemorrhagiae serovar copenhageni (strain Fiocruz L1-130).